A 227-amino-acid polypeptide reads, in one-letter code: 4'-phosphopantetheinyl transferase PptT (227 aa).

Residues arginine 48, arginine 56, lysine 75–lysine 78, threonine 92–histidine 93, and aspartate 114 contribute to the CoA site. Mg(2+) contacts are provided by aspartate 114, alanine 115, and glutamate 116. Positions 157, 161, and 171 each coordinate CoA.

The protein belongs to the P-Pant transferase superfamily. Mg(2+) is required as a cofactor.

The enzyme catalyses apo-[ACP] + CoA = holo-[ACP] + adenosine 3',5'-bisphosphate + H(+). With respect to regulation, inhibited by the amidino-urea compound 1-[(2,6-diethylphenyl)-3-N-ethylcarbamimodoyl]urea (compound 8918). It acts by binding to the phosphopantetheine pocket in the active site. Inhibition by compound 8918 kills M.tuberculosis. Transfers the 4'-phosphopantetheine moiety from coenzyme A to a Ser of acyl-carrier-protein. Involved in post-translational modification of various type-I polyketide synthases required for the formation of both mycolic acids and lipid virulence factors. Acts on Pks13, Mas, PpsA, PpsB, PpsC and PpsD. Also acts on AcpM, the meromycolate extension acyl carrier protein. In addition, is involved in the activation of the acyl carrier protein MbtL and the nonribosomal peptides synthases MbtB and MbtE, which are involved in the biosynthesis of the siderophore mycobactin. In terms of biological role, required for the replication and survival of Mycobacterium during the acute and chronic phases of infection in mice. The protein is 4'-phosphopantetheinyl transferase PptT of Mycobacterium tuberculosis (strain ATCC 25618 / H37Rv).